A 468-amino-acid chain; its full sequence is KASVGFKAGVKEYKLTYYTPTYETKDTDILAAFRVTPQPGVPPEEAGAAVAAESSTGTWTTVWTDGLTSLDRYKGRCYHIEPVAGEENQFIAYVAYPLDLFEEGSVTNMFTSIVGNVFGFKALRALRLEDLRIPTAYVKTFQGPPHGIQVERDKLNKYGRPLLGCTIKPKLGLSAKNYGRAVYECLRGGLDFTKDDENVNSQPFMRWRDRFLFCAEAIFKSQSETGEIKGHYLNATAGTCEEMMKRAIFARELGVPIVMHDYLTGGFTANTSLAHYCRDNGLLLHIHRAMHAVIDRQKNHGIHFRVLAKALRMSGGDHIHAGTVVGKLEGERDITLGFVDLLRDDFIEKDRSRGLFFTQDWVSLPGVLPVASGGIHVWHMPALTEIFGDDSVLQFGGGTLGHPWGNAPGAVANRVALEACVQARNEGRDLASEGNEIIREASKWSPELAAACEVWKEIKFEFEAMDTL.

At Lys-7 the chain carries N6,N6,N6-trimethyllysine. 2 residues coordinate substrate: Asn-116 and Thr-166. Lys-168 acts as the Proton acceptor in catalysis. Position 170 (Lys-170) interacts with substrate. Mg(2+) contacts are provided by Lys-194, Asp-196, and Glu-197. Lys-194 carries the N6-carboxylysine modification. His-287 acts as the Proton acceptor in catalysis. Arg-288, His-320, and Ser-372 together coordinate substrate.

This sequence belongs to the RuBisCO large chain family. Type I subfamily. In terms of assembly, heterohexadecamer of 8 large chains and 8 small chains; disulfide-linked. The disulfide link is formed within the large subunit homodimers. Mg(2+) is required as a cofactor. Post-translationally, the disulfide bond which can form in the large chain dimeric partners within the hexadecamer appears to be associated with oxidative stress and protein turnover.

It localises to the plastid. The protein localises to the chloroplast. The enzyme catalyses 2 (2R)-3-phosphoglycerate + 2 H(+) = D-ribulose 1,5-bisphosphate + CO2 + H2O. It catalyses the reaction D-ribulose 1,5-bisphosphate + O2 = 2-phosphoglycolate + (2R)-3-phosphoglycerate + 2 H(+). RuBisCO catalyzes two reactions: the carboxylation of D-ribulose 1,5-bisphosphate, the primary event in carbon dioxide fixation, as well as the oxidative fragmentation of the pentose substrate in the photorespiration process. Both reactions occur simultaneously and in competition at the same active site. The protein is Ribulose bisphosphate carboxylase large chain of Cornus alternifolia (Pagoda dogwood).